A 207-amino-acid polypeptide reads, in one-letter code: ATP synthase subunit b 2 (207 aa).

The chain crosses the membrane as a helical span at residues 53 to 72 (TYASQLLWLVITFGVFYLLM).

It belongs to the ATPase B chain family. As to quaternary structure, F-type ATPases have 2 components, F(1) - the catalytic core - and F(0) - the membrane proton channel. F(1) has five subunits: alpha(3), beta(3), gamma(1), delta(1), epsilon(1). F(0) has three main subunits: a(1), b(2) and c(10-14). The alpha and beta chains form an alternating ring which encloses part of the gamma chain. F(1) is attached to F(0) by a central stalk formed by the gamma and epsilon chains, while a peripheral stalk is formed by the delta and b chains.

The protein localises to the cell inner membrane. Its function is as follows. F(1)F(0) ATP synthase produces ATP from ADP in the presence of a proton or sodium gradient. F-type ATPases consist of two structural domains, F(1) containing the extramembraneous catalytic core and F(0) containing the membrane proton channel, linked together by a central stalk and a peripheral stalk. During catalysis, ATP synthesis in the catalytic domain of F(1) is coupled via a rotary mechanism of the central stalk subunits to proton translocation. In terms of biological role, component of the F(0) channel, it forms part of the peripheral stalk, linking F(1) to F(0). The b'-subunit is a diverged and duplicated form of b found in plants and photosynthetic bacteria. The sequence is that of ATP synthase subunit b 2 (atpF2) from Rhizobium etli (strain ATCC 51251 / DSM 11541 / JCM 21823 / NBRC 15573 / CFN 42).